The following is a 203-amino-acid chain: Large ribosomal subunit protein bL25 (203 aa).

It belongs to the bacterial ribosomal protein bL25 family. CTC subfamily. Part of the 50S ribosomal subunit; part of the 5S rRNA/L5/L18/L25 subcomplex. Contacts the 5S rRNA. Binds to the 5S rRNA independently of L5 and L18.

Functionally, this is one of the proteins that binds to the 5S RNA in the ribosome where it forms part of the central protuberance. The chain is Large ribosomal subunit protein bL25 from Paraburkholderia phymatum (strain DSM 17167 / CIP 108236 / LMG 21445 / STM815) (Burkholderia phymatum).